Here is a 1184-residue protein sequence, read N- to C-terminus: PR domain zinc finger protein 10 (1184 aa).

Residues 122–162 are disordered; that stretch reads LDAKEEEEEEEDEDEDTEEEEEEDAEDTDVDDWQPDPPRPF. Residues 125–155 are compositionally biased toward acidic residues; it reads KEEEEEEEDEDEDTEEEEEEDAEDTDVDDWQ. The 119-residue stretch at 202–320 folds into the SET domain; sequence LPLVLYIDRF…PKQELKVWYA (119 aa). Positions 221 to 325 are N-terminal PR domain; essential for transcriptional activator activity; that stretch reads IPKRTQFGPV…KVWYAASYAE (105 aa). A C2H2-type 1 zinc finger spans residues 349-371; sequence WPCYECNRRFISSEQLQQHLNSH. K374 is covalently cross-linked (Glycyl lysine isopeptide (Lys-Gly) (interchain with G-Cter in SUMO2)). Residues 381–401 show a composition bias toward basic residues; that stretch reads TRGRGRGRGKRRFGPGRRPGR. The interval 381–405 is disordered; sequence TRGRGRGRGKRRFGPGRRPGRPPKF. The residue at position 418 (S418) is a Phosphoserine. At T422 the chain carries Phosphothreonine. Residues 444–487 form a disordered region; it reads GLDQPEQASIPIPQLPQETPPSLEQEPETHTLHLQPQQEESLVP. Over residues 475 to 487 the composition is skewed to polar residues; the sequence is LHLQPQQEESLVP. 8 C2H2-type zinc fingers span residues 520–542, 550–572, 578–600, 606–629, 634–656, 662–685, 717–740, and 850–873; these read FKCL…LRFH, LTCD…MKLH, YSCI…VAIH, FTCP…RSFH, YQCT…MLRH, FLCS…QRMH, FKCR…SKRH, and VCCP…RKKH. The interval 917–1164 is C-terminal glutamine-rich region; essential for transcriptional activator activity; it reads QAMTELSQTL…TGPSQQQTTQ (248 aa). The interval 1004–1054 is disordered; sequence EPAPAAPSASQVAGQPLSPSAQQVQQGLSPSHIQGSSSTQGQALQQQQNSS. The segment covering 1014-1036 has biased composition (polar residues); the sequence is QVAGQPLSPSAQQVQQGLSPSHI. Residues 1037-1054 are compositionally biased toward low complexity; the sequence is QGSSSTQGQALQQQQNSS.

It belongs to the class V-like SAM-binding methyltransferase superfamily. Present in brain, liver, kidney, spleen and thymus (at protein level).

The protein localises to the nucleus. Its function is as follows. Transcriptional activator, essential for early embryonic development and survival of embryonic stem cells (ESCs). Supports cell growth and survival during early development by transcriptionally activating the expression of the translation initiation factor EIF3B, to sustain global translation. Activates the transcription of FLNC. The protein is PR domain zinc finger protein 10 (Prdm10) of Mus musculus (Mouse).